We begin with the raw amino-acid sequence, 553 residues long: Transmembrane protein DDB_G0292058 (553 aa).

The N-terminal stretch at 1–26 (MIKINKILSLLIILLIINCNYQFVKA) is a signal peptide. Helical transmembrane passes span 80-100 (ILLSGITFIIAAITLIFGIIF) and 137-157 (VFILKLVTLIMVAGCVAVFIT). Residues asparagine 162, asparagine 171, asparagine 178, and asparagine 195 are each glycosylated (N-linked (GlcNAc...) asparagine). A run of 2 helical transmembrane segments spans residues 243 to 263 (IIIVGLVFCMVVAGLIGVSAL) and 274 to 294 (SIALVILIPFMWIVFSVHYPI). N-linked (GlcNAc...) asparagine glycans are attached at residues asparagine 315, asparagine 332, asparagine 351, asparagine 396, asparagine 405, and asparagine 462. Residues 515–535 (LLIAPTAVFAILLTGLGITGI) traverse the membrane as a helical segment.

Its subcellular location is the membrane. The polypeptide is Transmembrane protein DDB_G0292058 (Dictyostelium discoideum (Social amoeba)).